A 289-amino-acid polypeptide reads, in one-letter code: Putative 2-aminoethylphosphonate transport system permease protein PhnU (289 aa).

The next 6 helical transmembrane spans lie at 19 to 39, 76 to 96, 111 to 131, 150 to 170, 202 to 222, and 254 to 274; these read WLLLPLLVLATLFFWPLSLIV, FFATAGCLLLGSVMSLILVFI, FIALPTFLITLAFTFIYGSAG, FLYSMQGVILAEITVFTPLVM, VIFPAALPALMAGGSLCLLLT, and YTVACMIALINIVLSLGLFSL. The 208-residue stretch at 68–275 folds into the ABC transmembrane type-1 domain; sequence LLNTLQIAFF…VLSLGLFSLY (208 aa).

It belongs to the binding-protein-dependent transport system permease family.

The protein resides in the cell inner membrane. In terms of biological role, probably part of the PhnSTUV complex (TC 3.A.1.11.5) involved in 2-aminoethylphosphonate import. Probably responsible for the translocation of the substrate across the membrane. The sequence is that of Putative 2-aminoethylphosphonate transport system permease protein PhnU (phnU) from Salmonella paratyphi A (strain ATCC 9150 / SARB42).